We begin with the raw amino-acid sequence, 681 residues long: Long-chain-fatty-acid--CoA ligase heimdall (681 aa).

ATP contacts are provided by residues 223-231 (TSGTVGMPK), 414-419 (ECYGMS), D491, R506, and K639.

It belongs to the ATP-dependent AMP-binding enzyme family. Bubblegum subfamily.

The catalysed reaction is a long-chain fatty acid + ATP + CoA = a long-chain fatty acyl-CoA + AMP + diphosphate. Mediates activation of long-chain fatty acids for both synthesis of cellular lipids, and degradation via beta-oxidation. Probably by regulating lipid storage and catabolism, plays a role in neuronal function. This is Long-chain-fatty-acid--CoA ligase heimdall from Drosophila melanogaster (Fruit fly).